Here is a 403-residue protein sequence, read N- to C-terminus: Arginine biosynthesis bifunctional protein ArgJ (403 aa).

Over residues 1–11 the composition is skewed to polar residues; the sequence is MVQSVLSSTSH. A disordered region spans residues 1-21; that stretch reads MVQSVLSSTSHGSERADMSAA. T161, K183, T194, E273, N398, and T403 together coordinate substrate. T194 acts as the Nucleophile in catalysis.

This sequence belongs to the ArgJ family. In terms of assembly, heterotetramer of two alpha and two beta chains.

It is found in the cytoplasm. It catalyses the reaction N(2)-acetyl-L-ornithine + L-glutamate = N-acetyl-L-glutamate + L-ornithine. The enzyme catalyses L-glutamate + acetyl-CoA = N-acetyl-L-glutamate + CoA + H(+). Its pathway is amino-acid biosynthesis; L-arginine biosynthesis; L-ornithine and N-acetyl-L-glutamate from L-glutamate and N(2)-acetyl-L-ornithine (cyclic): step 1/1. It participates in amino-acid biosynthesis; L-arginine biosynthesis; N(2)-acetyl-L-ornithine from L-glutamate: step 1/4. In terms of biological role, catalyzes two activities which are involved in the cyclic version of arginine biosynthesis: the synthesis of N-acetylglutamate from glutamate and acetyl-CoA as the acetyl donor, and of ornithine by transacetylation between N(2)-acetylornithine and glutamate. In Rhodococcoides fascians (Rhodococcus fascians), this protein is Arginine biosynthesis bifunctional protein ArgJ.